A 369-amino-acid polypeptide reads, in one-letter code: UPF0284 protein sll1500 (369 aa).

It belongs to the UPF0284 family.

In Synechocystis sp. (strain ATCC 27184 / PCC 6803 / Kazusa), this protein is UPF0284 protein sll1500.